The chain runs to 343 residues: Small ribosomal subunit biogenesis GTPase RsgA (343 aa).

One can recognise a CP-type G domain in the interval 116–275; the sequence is RGQLKPVAAN…LIDSPGIREF (160 aa). Residues 163-166 and 217-225 each bind GTP; these read NKAD and GQSGVGKSS. Residues C299, C304, H306, and C312 each contribute to the Zn(2+) site.

It belongs to the TRAFAC class YlqF/YawG GTPase family. RsgA subfamily. As to quaternary structure, monomer. Associates with 30S ribosomal subunit, binds 16S rRNA. Zn(2+) is required as a cofactor.

It localises to the cytoplasm. Its function is as follows. One of several proteins that assist in the late maturation steps of the functional core of the 30S ribosomal subunit. Helps release RbfA from mature subunits. May play a role in the assembly of ribosomal proteins into the subunit. Circularly permuted GTPase that catalyzes slow GTP hydrolysis, GTPase activity is stimulated by the 30S ribosomal subunit. This is Small ribosomal subunit biogenesis GTPase RsgA from Pseudomonas fluorescens (strain ATCC BAA-477 / NRRL B-23932 / Pf-5).